Consider the following 356-residue polypeptide: Protein-arginine kinase (356 aa).

The region spanning Ile-24–Ala-254 is the Phosphagen kinase C-terminal domain. ATP is bound by residues Ser-27–Arg-31, His-92, Arg-125, Arg-176–Met-180, and Arg-207–Glu-212. Residues Arg-337–Ala-342 carry the RDXXRA motif of the pArg binding pocket involved in allosteric regulation motif.

Belongs to the ATP:guanido phosphotransferase family.

It carries out the reaction L-arginyl-[protein] + ATP = N(omega)-phospho-L-arginyl-[protein] + ADP + H(+). Its activity is regulated as follows. Appears to be allosterically activated by the binding of pArg-containing polypeptides to the pArg-binding pocket localized in the C-terminal domain of McsB. Catalyzes the specific phosphorylation of arginine residues in a large number of proteins. Is part of the bacterial stress response system. Protein arginine phosphorylation has a physiologically important role and is involved in the regulation of many critical cellular processes, such as protein homeostasis, motility, competence, and stringent and stress responses, by regulating gene expression and protein activity. The polypeptide is Protein-arginine kinase (Bacillus cytotoxicus (strain DSM 22905 / CIP 110041 / 391-98 / NVH 391-98)).